A 508-amino-acid polypeptide reads, in one-letter code: Light-independent protochlorophyllide reductase subunit B (508 aa).

[4Fe-4S] cluster is bound at residue Asp36. The active-site Proton donor is the Asp294. Substrate is bound at residue 429-430 (GM).

The protein belongs to the ChlB/BchB/BchZ family. As to quaternary structure, protochlorophyllide reductase is composed of three subunits; ChlL, ChlN and ChlB. Forms a heterotetramer of two ChlB and two ChlN subunits. [4Fe-4S] cluster serves as cofactor.

It carries out the reaction chlorophyllide a + oxidized 2[4Fe-4S]-[ferredoxin] + 2 ADP + 2 phosphate = protochlorophyllide a + reduced 2[4Fe-4S]-[ferredoxin] + 2 ATP + 2 H2O. The protein operates within porphyrin-containing compound metabolism; chlorophyll biosynthesis (light-independent). Its function is as follows. Component of the dark-operative protochlorophyllide reductase (DPOR) that uses Mg-ATP and reduced ferredoxin to reduce ring D of protochlorophyllide (Pchlide) to form chlorophyllide a (Chlide). This reaction is light-independent. The NB-protein (ChlN-ChlB) is the catalytic component of the complex. This Crocosphaera subtropica (strain ATCC 51142 / BH68) (Cyanothece sp. (strain ATCC 51142)) protein is Light-independent protochlorophyllide reductase subunit B.